Reading from the N-terminus, the 236-residue chain is Rho-related GTP-binding protein RhoV (236 aa).

Residues 1–27 (MPPRELSEAESSPLRSPTPPPGRGSAS) are disordered. Residue Ser-25 is modified to Phosphoserine. Residues 38 to 45 (GDGAVGKS), 85 to 89 (DTAGQ), and 143 to 146 (TQAD) contribute to the GTP site. Cys-234 carries S-palmitoyl cysteine lipidation.

It belongs to the small GTPase superfamily. Rho family. In terms of assembly, interacts with PAK2. Requires Mg(2+) as cofactor.

It is found in the cell membrane. The protein localises to the endosome membrane. Plays a role in the control of the actin cytoskeleton via activation of the JNK pathway. This chain is Rho-related GTP-binding protein RhoV, found in Bos taurus (Bovine).